A 552-amino-acid polypeptide reads, in one-letter code: Membrane protein insertase YidC (552 aa).

A run of 5 helical transmembrane segments spans residues 7-24, 364-384, 434-454, 473-493, and 508-528; these read VLWV…DNWQ, WGWA…PLSA, LPVV…LASV, PFFI…SLNP, and PIAF…YYVV.

The protein belongs to the OXA1/ALB3/YidC family. Type 1 subfamily. Interacts with the Sec translocase complex via SecD. Specifically interacts with transmembrane segments of nascent integral membrane proteins during membrane integration.

It is found in the cell inner membrane. In terms of biological role, required for the insertion and/or proper folding and/or complex formation of integral membrane proteins into the membrane. Involved in integration of membrane proteins that insert both dependently and independently of the Sec translocase complex, as well as at least some lipoproteins. Aids folding of multispanning membrane proteins. This is Membrane protein insertase YidC from Burkholderia cenocepacia (strain HI2424).